A 64-amino-acid chain; its full sequence is Large ribosomal subunit protein uL30 (64 aa).

The protein belongs to the universal ribosomal protein uL30 family. As to quaternary structure, part of the 50S ribosomal subunit.

In Desulforudis audaxviator (strain MP104C), this protein is Large ribosomal subunit protein uL30.